Here is a 142-residue protein sequence, read N- to C-terminus: Ribosome-binding factor A (142 aa).

Positions 119–142 (EAKQKQHGVETDAEQGETKDEGDK) are disordered.

It belongs to the RbfA family. Monomer. Binds 30S ribosomal subunits, but not 50S ribosomal subunits or 70S ribosomes.

The protein resides in the cytoplasm. Functionally, one of several proteins that assist in the late maturation steps of the functional core of the 30S ribosomal subunit. Associates with free 30S ribosomal subunits (but not with 30S subunits that are part of 70S ribosomes or polysomes). Required for efficient processing of 16S rRNA. May interact with the 5'-terminal helix region of 16S rRNA. The sequence is that of Ribosome-binding factor A from Shewanella halifaxensis (strain HAW-EB4).